Consider the following 143-residue polypeptide: Translation initiation factor 2 subunit beta (143 aa).

It belongs to the eIF-2-beta/eIF-5 family. In terms of assembly, heterotrimer composed of an alpha, a beta and a gamma chain.

Its function is as follows. eIF-2 functions in the early steps of protein synthesis by forming a ternary complex with GTP and initiator tRNA. The polypeptide is Translation initiation factor 2 subunit beta (eif2b) (Methanocaldococcus jannaschii (strain ATCC 43067 / DSM 2661 / JAL-1 / JCM 10045 / NBRC 100440) (Methanococcus jannaschii)).